The primary structure comprises 620 residues: MTVRNGGFPGDYNRNSFDSPGGCDDSPNASKDDETFGVPRIVLPLSDLSSSERRKWIHTLRQELEQLRSFQKSVGDLLPISKIVTSTPASNVSRPKSFGMSRCSTGPGKRVLPFTATKPEPVTTSTMLRMKQCESLLKRLMSQQHCWLFNTPVDVVKLNIPDYFTIIKHPMDLGTVKSKLTSGTYSSPSEFSADVRLTFRNAMTYNPSDNNVYRFADTLSKFFEVRWKTIEKKSSGTKSEPSNLATLAHKDIAIPEPVAKKRKMNAVKRNSLLEPAKRVMTDEDRVKLGRDLGSLTEFPVQIINFLRDHSSKEERSGDDEIEIDINDLSHDALFQLRDLFDEFLRENQKKDSNGEPCVLELLHGSGPGNSLTQHCDGSELEDEDVDIGNYEHPISHISTVRTEKDSVGGLNQMEDASRGKLSLIEGADGHQDGNSAPKEKELPPEKRYRAALLKNRFADIILKAQEITLNQNEKRDPETLQREKEELELQKKKEKARLQAEAKEAEEARRKAEAQEAKRKLELEREAARQALLEMEKSVEINENTRFLKDLELLKTVNTDQLRNLRDVGSESDGLAVFGFGGSNPLEQLGLFMKHEEDEDESDMLAFPDPGNEVEEGEID.

The segment at 1 to 35 (MTVRNGGFPGDYNRNSFDSPGGCDDSPNASKDDET) is disordered. Positions 124 to 230 (TSTMLRMKQC…KFFEVRWKTI (107 aa)) constitute a Bromo domain. In terms of domain architecture, NET spans 270–351 (NSLLEPAKRV…EFLRENQKKD (82 aa)). Ser-417 carries the phosphoserine modification. Positions 445-620 (EKRYRAALLK…GNEVEEGEID (176 aa)) are transcription activation domain. Positions 470 to 544 (NQNEKRDPET…MEKSVEINEN (75 aa)) form a coiled coil. Disordered regions lie at residues 491-511 (KKKE…ARRK) and 597-620 (EDED…GEID).

As to quaternary structure, interacts with BT1, BT2 and BT4.

It is found in the nucleus. This is Transcription factor GTE11 (GTE11) from Arabidopsis thaliana (Mouse-ear cress).